The following is a 146-amino-acid chain: Cyanate hydratase (146 aa).

Catalysis depends on residues R87, E90, and S113.

Belongs to the cyanase family.

It carries out the reaction cyanate + hydrogencarbonate + 3 H(+) = NH4(+) + 2 CO2. In terms of biological role, catalyzes the reaction of cyanate with bicarbonate to produce ammonia and carbon dioxide. In Trichormus variabilis (strain ATCC 29413 / PCC 7937) (Anabaena variabilis), this protein is Cyanate hydratase.